We begin with the raw amino-acid sequence, 148 residues long: Receptor activity-modifying protein 1 (148 aa).

An N-terminal signal peptide occupies residues 1-26; the sequence is MVRVLRGLPWRGLWLLLAHQLFLVTA. 3 cysteine pairs are disulfide-bonded: Cys-27–Cys-82, Cys-40–Cys-72, and Cys-57–Cys-104. Topologically, residues 27-118 are extracellular; the sequence is CQDAHYGTLM…RALGDPPSTI (92 aa). The chain crosses the membrane as a helical span at residues 119 to 140; it reads LCPFVVLPITVTLLVTALVVWR. Over 141–148 the chain is Cytoplasmic; sequence SKRAESIV.

This sequence belongs to the RAMP family. In terms of assembly, heterodimer of CALCRL and RAMP1; the interaction induces allosteric modulation of CALCRL function and CGRP1/CALCA and CGRP2/CALCB ligand specificity. Heterodimer of CALCR and RAMP1; interaction forms the AMYR1 receptor complex for amylin/IAPP and CGRP1/CALCA ligands.

It localises to the cell membrane. Its function is as follows. Accessory protein that interacts with and modulates the function of G-protein coupled receptors including calcitonin gene-related peptide type 1 receptor (CALCRL) and calcitonin receptor (CALCR). Required for the transport of CALCRL to the plasma membrane. Together with CALCRL, form the receptor complex for the calcitonin gene-related peptides CGRP1/CALCA and CGRP2/CALCB. Together with CALCR, form the AMYR1 receptor complex for amylin/IAPP and CGRP1/CALCA. This chain is Receptor activity-modifying protein 1 (RAMP1), found in Cavia porcellus (Guinea pig).